The sequence spans 80 residues: uncharacterized protein (80 aa).

The next 3 membrane-spanning stretches (helical) occupy residues 2 to 22 (INLW…IGQV), 32 to 52 (FFGM…LTGG), and 55 to 75 (LVTG…RFMV).

Its subcellular location is the cell membrane. This is an uncharacterized protein from Escherichia coli (strain K12).